Consider the following 1405-residue polypeptide: MKDLLKFLKQQSKTEEFNGIKIGLASPDLIRSWSFGEVKKPETINYRTFKPEREGLFCARIFGPVKDYECLCGKYKRLKHRGVICEKCGVEVTQTKVRRERMGHIELASPVAHIWFLKSLPSRIGLMLDMTLRDIERVLYFESFVVIEPGMTSLERGQMLTEENYLDALEEYGDEFEAKMGAEAVLELLRAIDLEKEIEQMREELPSINSETRRKKVTKRLKLMEAFHTSGNKPEWMILKVLPVLPPDLRPLVPLDGGRFATSDLNDLYRRVINRNNRLKRLLDLAAPDIIVRNEKRMLQESVDALLDNGRRGRAITGSNKRPLKSLADMIKGKQGRFRQNLLGKRVDYSGRSVITVGPTLRLHQCGLPKKMALELFKPFIYGKLEGRGLATTIKAAKKMVEREVAEVWDVLDEVIREHPVMLNRAPTLHRLGIQAFEPVLIEGKAIQLHPLVCAAYNADFDGDQMAVHVPLTLEAQLEARALMMSTNNILSPANGEPVITPSQDVVLGLYYTSRERINGRGEGMYFMSVAEVEKAYATGAAELHARVKVRITETVIGDNGERTEQRRIVDTTVGRALLSQILPAGLSFDLVNQNMGKKQISKLLNTCYRQLGLKDTVIFADQLMYTGFRYATISGASVGIDDMVIPAEKYTLVADAEAEVLEIQEQFQSGLVTAGERYNKVIDIWASANEKVSKAMMENLSTETVINRDGVEEKQASFNSIYMMADSGARGSAAQIRQLAGMRGLMAKPDGSIIETPIVANFREGLNVLQYFISTHGARKGLADTALKTANSGYLTRRLVDVAQDLVVIEDDCGTHEGLTMKPLIEGGDVVEPLRERVLGRVVAVDVMYPGTEDVLAPRNTLLDEAWCDKLEEHSIDEVIVRSVITCDTDFGVCAACYGRDLARGHLINHGEAIGVVAAQSIGEPGTQLTMRTFHIGGAASRASAENNVQVKNSGSLKLHNAKYVTNTDGKLVIVSRSSELAIIDELGREKERYKVPYGTVLEKLEEASVEAGDIIANWDPHTHPIITEVAGSIKFVDMIDGVTMTRQTDELTGLSSIVILDVGQRGSAGKEMRPMIRLVGADGSDLMIPGTEVPAQYFLPGSAIVNLDDNAQIAVGDALARIPQESSKTRDITGGLPRVADLFEARKPKEPAILAEISGTISFGKETKGKRRLVITPADGGEQYEEMIPKWRNLNVFEGEKVERGEVIADGPEAAHDILRLRGIHNVANYIVNEVQDVYRLQGVKINDKHIEVIIRQMLRKCVITSAGDSEFLEGEQVEVSRVKIANRELVEQGKVPATFERELLGITKASLATESFISAASFQETTRVLTEAAVGGKSDNLRGLKENVIVGRLIPAGTGYAYHKTRNDARAKKDEPVVVNKITASEAEQNLADLLNLAGSQD.

Zn(2+)-binding residues include C70, C72, C85, and C88. Residues D460, D462, and D464 each contribute to the Mg(2+) site. Residues C814, C888, C895, and C898 each coordinate Zn(2+).

The protein belongs to the RNA polymerase beta' chain family. The RNAP catalytic core consists of 2 alpha, 1 beta, 1 beta' and 1 omega subunit. When a sigma factor is associated with the core the holoenzyme is formed, which can initiate transcription. Mg(2+) is required as a cofactor. The cofactor is Zn(2+).

The catalysed reaction is RNA(n) + a ribonucleoside 5'-triphosphate = RNA(n+1) + diphosphate. DNA-dependent RNA polymerase catalyzes the transcription of DNA into RNA using the four ribonucleoside triphosphates as substrates. The protein is DNA-directed RNA polymerase subunit beta' of Shewanella sp. (strain MR-7).